A 460-amino-acid polypeptide reads, in one-letter code: Dihydroorotate dehydrogenase (quinone), mitochondrial (460 aa).

Residues 1–32 constitute a mitochondrion transit peptide; it reads MAGRAATSSAKWAREFLFRRVSSNPLGATRNC. The chain crosses the membrane as a helical span at residues 53–69; sequence ILTGATIGLAIAGGAYV. Residues 141 to 145 and Ser-165 contribute to the FMN site; that span reads AGFDK. Residue Lys-145 coordinates substrate. 190–194 serves as a coordination point for substrate; that stretch reads NRCGF. Residues 213-245 form a disordered region; that stretch reads RMLAETSATSSSPSDDVKPGGKSGPGILGVNLG. FMN-binding residues include Asn-243 and Asn-274. 274–279 contacts substrate; sequence NVSSPN. Ser-277 functions as the Nucleophile in the catalytic mechanism. Residues Lys-319 and Ser-347 each coordinate FMN. Position 348 to 349 (348 to 349) interacts with substrate; the sequence is NT. FMN is bound by residues Gly-371, Gly-400, and 421–422; that span reads YT.

This sequence belongs to the dihydroorotate dehydrogenase family. Type 2 subfamily. It depends on FMN as a cofactor.

It is found in the mitochondrion inner membrane. It catalyses the reaction (S)-dihydroorotate + a quinone = orotate + a quinol. The protein operates within pyrimidine metabolism; UMP biosynthesis via de novo pathway; orotate from (S)-dihydroorotate (quinone route): step 1/1. Functionally, catalyzes the conversion of dihydroorotate to orotate with quinone as electron acceptor. This is Dihydroorotate dehydrogenase (quinone), mitochondrial (PYRD) from Arabidopsis thaliana (Mouse-ear cress).